A 486-amino-acid polypeptide reads, in one-letter code: Endoglucanase 16 (486 aa).

An N-terminal signal peptide occupies residues 1–30 (MANYKGRGNVMIRSMLLGLYGIINIVCVNG). The N-linked (GlcNAc...) asparagine glycan is linked to asparagine 29. The active-site Nucleophile is aspartate 87. Active-site residues include histidine 407, aspartate 458, and glutamate 467.

The protein belongs to the glycosyl hydrolase 9 (cellulase E) family.

It localises to the secreted. It catalyses the reaction Endohydrolysis of (1-&gt;4)-beta-D-glucosidic linkages in cellulose, lichenin and cereal beta-D-glucans.. The sequence is that of Endoglucanase 16 from Arabidopsis thaliana (Mouse-ear cress).